A 467-amino-acid polypeptide reads, in one-letter code: ATP-dependent protease ATPase subunit HslU (467 aa).

ATP is bound by residues V20, 62–67 (GVGKTE), D280, E345, and R417.

This sequence belongs to the ClpX chaperone family. HslU subfamily. As to quaternary structure, a double ring-shaped homohexamer of HslV is capped on each side by a ring-shaped HslU homohexamer. The assembly of the HslU/HslV complex is dependent on binding of ATP.

The protein localises to the cytoplasm. Functionally, ATPase subunit of a proteasome-like degradation complex; this subunit has chaperone activity. The binding of ATP and its subsequent hydrolysis by HslU are essential for unfolding of protein substrates subsequently hydrolyzed by HslV. HslU recognizes the N-terminal part of its protein substrates and unfolds these before they are guided to HslV for hydrolysis. This Enterococcus faecalis (strain ATCC 700802 / V583) protein is ATP-dependent protease ATPase subunit HslU.